Reading from the N-terminus, the 189-residue chain is Putative manganese efflux pump MntP (189 aa).

6 helical membrane-spanning segments follow: residues 2 to 22 (SLTELILLAIGLSMDASAVSI), 36 to 56 (ILQMAVMFAVFQGIMPLIGYY), 71 to 91 (WIAFILLVIIGGKMIHESITA), 106 to 126 (LLLVQAVATSIDALAVGVSLS), 132 to 152 (ILYSITIIGIVTFICCTAAIL), and 167 to 187 (IVGGLILVGIGVKIFVQHMFF).

The protein belongs to the MntP (TC 9.B.29) family.

Its subcellular location is the cell membrane. Probably functions as a manganese efflux pump. The polypeptide is Putative manganese efflux pump MntP (Ruminiclostridium cellulolyticum (strain ATCC 35319 / DSM 5812 / JCM 6584 / H10) (Clostridium cellulolyticum)).